Consider the following 262-residue polypeptide: Hydroxyethylthiazole kinase (262 aa).

Substrate is bound at residue M50. The ATP site is built by R125 and T171. G198 is a binding site for substrate.

The protein belongs to the Thz kinase family. Mg(2+) serves as cofactor.

The enzyme catalyses 5-(2-hydroxyethyl)-4-methylthiazole + ATP = 4-methyl-5-(2-phosphooxyethyl)-thiazole + ADP + H(+). It functions in the pathway cofactor biosynthesis; thiamine diphosphate biosynthesis; 4-methyl-5-(2-phosphoethyl)-thiazole from 5-(2-hydroxyethyl)-4-methylthiazole: step 1/1. In terms of biological role, catalyzes the phosphorylation of the hydroxyl group of 4-methyl-5-beta-hydroxyethylthiazole (THZ). The sequence is that of Hydroxyethylthiazole kinase from Shigella sonnei (strain Ss046).